A 425-amino-acid chain; its full sequence is Kynurenine/alpha-aminoadipate aminotransferase, mitochondrial (425 aa).

A mitochondrion-targeting transit peptide spans 1-29; it reads MNYSRFLTATSLARKPSPIRTTADILSKA. R20 serves as a coordination point for substrate. The residue at position 40 (S40) is a Phosphoserine. K69 is modified (N6-acetyllysine). Position 74 (Y74) interacts with substrate. K172 bears the N6-succinyllysine mark. N6-acetyllysine is present on K179. Residue N202 participates in substrate binding. K263 carries the post-translational modification N6-(pyridoxal phosphate)lysine; alternate. 2 positions are modified to N6-acetyllysine; alternate: K263 and K339. N6-succinyllysine; alternate is present on residues K263 and K339. The residue at position 351 (K351) is an N6-acetyllysine. An N6-acetyllysine; alternate modification is found at K367. The residue at position 367 (K367) is an N6-succinyllysine; alternate. Position 399 (R399) interacts with substrate. K422 carries the post-translational modification N6-acetyllysine.

Belongs to the class-I pyridoxal-phosphate-dependent aminotransferase family. Homodimer. Pyridoxal 5'-phosphate is required as a cofactor. Expressed mainly in kidney and to a lesser amount in liver and brain.

Its subcellular location is the mitochondrion. The enzyme catalyses L-kynurenine + 2-oxoglutarate = kynurenate + L-glutamate + H2O. The catalysed reaction is L-2-aminoadipate + 2-oxoglutarate = 2-oxoadipate + L-glutamate. It carries out the reaction glycine + 2-oxoglutarate = glyoxylate + L-glutamate. It catalyses the reaction L-kynurenine + glyoxylate = kynurenate + glycine + H2O. The enzyme catalyses 3-hydroxy-L-kynurenine + glyoxylate = xanthurenate + glycine + H2O. The catalysed reaction is 2-oxohexanoate + L-kynurenine = L-2-aminohexanoate + kynurenate + H2O. It carries out the reaction 3-phenylpyruvate + L-kynurenine = kynurenate + L-phenylalanine + H2O. It catalyses the reaction 4-methylsulfanyl-2-oxobutanoate + L-kynurenine = kynurenate + L-methionine + H2O. The enzyme catalyses 2-oxo-3-sulfanylpropanoate + L-kynurenine = kynurenate + L-cysteine + H2O. The catalysed reaction is indole-3-pyruvate + L-kynurenine = kynurenate + L-tryptophan + H2O. It carries out the reaction 2-oxopentanoate + L-kynurenine = L-2-aminopentanoate + kynurenate + H2O. It catalyses the reaction 4-methyl-2-oxopentanoate + L-kynurenine = kynurenate + L-leucine + H2O. The enzyme catalyses glyoxylate + L-methionine = 4-methylsulfanyl-2-oxobutanoate + glycine. The catalysed reaction is L-2-aminoadipate + glyoxylate = 2-oxoadipate + glycine. It carries out the reaction L-tyrosine + glyoxylate = 3-(4-hydroxyphenyl)pyruvate + glycine. It catalyses the reaction glyoxylate + L-phenylalanine = 3-phenylpyruvate + glycine. The enzyme catalyses L-tryptophan + glyoxylate = indole-3-pyruvate + glycine. The catalysed reaction is L-leucine + glyoxylate = 4-methyl-2-oxopentanoate + glycine. It carries out the reaction 2-oxobutanoate + L-kynurenine = (2S)-2-aminobutanoate + kynurenate + H2O. It catalyses the reaction 2-oxoadipate + L-kynurenine = L-2-aminoadipate + kynurenate + H2O. Its pathway is amino-acid degradation; L-lysine degradation via saccharopine pathway; glutaryl-CoA from L-lysine: step 4/6. In terms of biological role, transaminase with broad substrate specificity. Has transaminase activity towards aminoadipate, kynurenine, methionine and glutamate. Shows activity also towards tryptophan, aspartate and hydroxykynurenine. Accepts a variety of oxo-acids as amino-group acceptors, with a preference for 2-oxoglutarate, 2-oxocaproic acid, phenylpyruvate and alpha-oxo-gamma-methiol butyric acid. Can also use glyoxylate as amino-group acceptor (in vitro). The sequence is that of Kynurenine/alpha-aminoadipate aminotransferase, mitochondrial from Mus musculus (Mouse).